The sequence spans 218 residues: MSIGILGKKLGMSQLFDEQGRAVPVTLIEAGPCRITQLKNDDTDGYAAVQIGFGETREKLINKPSKGHLTKSGEDLLRHLREYRVDNVDGLELGGSITVSDFEAGQKVDVSGDTMGRGFAGLQKRHGFSRGPMTHGSKNHRQPGSIGAGTTPGRIYPGKRMSGRYGGKKTTTRGLTILRIDSDRNLLVVKGSVPGKPGALLNIKPAVRVGAKPAKGGK.

The disordered stretch occupies residues 126 to 169 (HGFSRGPMTHGSKNHRQPGSIGAGTTPGRIYPGKRMSGRYGGKK).

It belongs to the universal ribosomal protein uL3 family. Part of the 50S ribosomal subunit. Forms a cluster with proteins L14 and L19.

Functionally, one of the primary rRNA binding proteins, it binds directly near the 3'-end of the 23S rRNA, where it nucleates assembly of the 50S subunit. The sequence is that of Large ribosomal subunit protein uL3 from Synechococcus sp. (strain CC9902).